The following is a 535-amino-acid chain: MKKISLKTLRKSFNLNKSKEETDFMVVQQPSLASDFGKDDSLFGSCYGKDMASCDINGEDEKGGKNRSKSESLMGTLKRRLSAKQKSKGKAGTPSGSSADEDTFSSSSAPIVFKDVRAQRPIRSTSLRSHHYSPAPWPLRPTNSEETCIKMEVRVKALVHSSSPSPALNGVRKDFHDLQSETTCQEQANSLKSSASHNGDLHLHLDEHVPVVIGLMPQDYIQYTVPLDEGMYPLEGSRSYCLDSSSPMEVSAVPPQVGGRAFPEDESQVDQDLVVAPEIFVDQSVNGLLIGTTGVMLQSPRAGHDDVPPLSPLLPPMQNNQIQRNFSGLTGTEAHVAESMRCHLNFDPNSAPGVARVYDSVQSSGPMVVTSLTEELKKLAKQGWYWGPITRWEAEGKLANVPDGSFLVRDSSDDRYLLSLSFRSHGKTLHTRIEHSNGRFSFYEQPDVEGHTSIVDLIEHSIRDSENGAFCYSRSRLPGSATYPVRLTNPVSRFMQVRSLQYLCRFVIRQYTRIDLIQKLPLPNKMKDYLQEKHY.

The segment covering 80 to 89 has biased composition (basic residues); the sequence is RLSAKQKSKG. The interval 80–105 is disordered; the sequence is RLSAKQKSKGKAGTPSGSSADEDTFS. In terms of domain architecture, SH2 spans 384–491; it reads WYWGPITRWE…TYPVRLTNPV (108 aa). The SOCS box domain occupies 486 to 535; the sequence is RLTNPVSRFMQVRSLQYLCRFVIRQYTRIDLIQKLPLPNKMKDYLQEKHY.

In terms of assembly, interacts with RBCK1. Interacts with phosphorylated IRS4. Interacts with PIM3. Interacts with KIT (phosphorylated).

Its pathway is protein modification; protein ubiquitination. Functionally, SOCS family proteins form part of a classical negative feedback system that regulates cytokine signal transduction. May be a substrate recognition component of a SCF-like ECS (Elongin BC-CUL2/5-SOCS-box protein) E3 ubiquitin-protein ligase complex which mediates the ubiquitination and subsequent proteasomal degradation of target proteins. Regulates KIT degradation by ubiquitination of the tyrosine-phosphorylated receptor. The protein is Suppressor of cytokine signaling 6 (SOCS6) of Homo sapiens (Human).